A 297-amino-acid chain; its full sequence is MSSAHFNRGPAYGLSAEVKNKLAQKYDHQREQELREWIEGVTGRRIGNNFMDGLKDGIILCEFINKLQPGSVKKINESTQNWHQLENIGNFIKAITKYGVKPHDIFEANDLFENTNHTQVQSTLLALASMAKTKGNKVNVGVKYAEKQERKFEPGKLREGRNIIGLQMGTNKFASQQGMTAYGTRRHLYDPKLGTDQPLDQATISLQMGTNKGASQAGMTAPGTKRQIFEPGLGMEHCDTLNVSLQMGSNKGASQRGMTVYGLPRQVYDPKYCLTPEYPELGEPAHNHHAHNYYNSA.

The region spanning 28–131 (HQREQELREW…STLLALASMA (104 aa)) is the Calponin-homology (CH) domain. 3 Calponin-like repeats span residues 164–189 (IGLQ…RHLY), 204–229 (ISLQ…RQIF), and 243–268 (VSLQ…RQVY). Thr-170 is modified (phosphothreonine; by ROCK2). At Ser-175 the chain carries Phosphoserine; by ROCK2. Phosphothreonine; by ROCK2 is present on residues Thr-180 and Thr-184. Thr-259 is modified (phosphothreonine; by ROCK2).

Belongs to the calponin family. In terms of assembly, part of cGMP kinase signaling complex at least composed of ACTA2/alpha-actin, CNN1/calponin H1, PLN/phospholamban, PRKG1 and ITPR1. As to expression, smooth muscle, and tissues containing significant amounts of smooth muscle.

Its function is as follows. Thin filament-associated protein that is implicated in the regulation and modulation of smooth muscle contraction. It is capable of binding to actin, calmodulin and tropomyosin. The interaction of calponin with actin inhibits the actomyosin Mg-ATPase activity. This chain is Calponin-1 (CNN1), found in Homo sapiens (Human).